The primary structure comprises 343 residues: Photosystem II protein D1 (343 aa).

Helical transmembrane passes span 28–45 (YIGW…VSTV), 117–132 (HFLA…EYEY), and 141–155 (WIYL…AASA). A chlorophyll a-binding site is contributed by H117. Position 125 (W125) interacts with pheophytin a. Residues D169 and E188 each coordinate [CaMn4O5] cluster. The chain crosses the membrane as a helical span at residues 196–217 (FHILGVSAVFGGSLFSAMHGSL). Position 197 (H197) interacts with chlorophyll a. Residues H214 and 263 to 264 (SF) contribute to the a quinone site. H214 is a binding site for Fe cation. Residue H271 coordinates Fe cation. A helical membrane pass occupies residues 273-287 (FLAAWPVIGIWCTAI). Positions 331, 332, 341, and 343 each coordinate [CaMn4O5] cluster.

It belongs to the reaction center PufL/M/PsbA/D family. PSII is composed of 1 copy each of membrane proteins PsbA, PsbB, PsbC, PsbD, PsbE, PsbF, PsbH, PsbI, PsbJ, PsbK, PsbL, PsbM, PsbT, PsbX, PsbY, PsbZ, Psb30/Ycf12, at least 3 peripheral proteins of the oxygen-evolving complex and a large number of cofactors. It forms dimeric complexes. The D1/D2 heterodimer binds P680, chlorophylls that are the primary electron donor of PSII, and subsequent electron acceptors. It shares a non-heme iron and each subunit binds pheophytin, quinone, additional chlorophylls, carotenoids and lipids. D1 provides most of the ligands for the Mn4-Ca-O5 cluster of the oxygen-evolving complex (OEC). There is also a Cl(-1) ion associated with D1 and D2, which is required for oxygen evolution. The PSII complex binds additional chlorophylls, carotenoids and specific lipids. is required as a cofactor. In terms of processing, tyr-160 forms a radical intermediate that is referred to as redox-active TyrZ, YZ or Y-Z.

The protein localises to the plastid. The protein resides in the chloroplast thylakoid membrane. It carries out the reaction 2 a plastoquinone + 4 hnu + 2 H2O = 2 a plastoquinol + O2. Photosystem II (PSII) is a light-driven water:plastoquinone oxidoreductase that uses light energy to abstract electrons from H(2)O, generating O(2) and a proton gradient subsequently used for ATP formation. It consists of a core antenna complex that captures photons, and an electron transfer chain that converts photonic excitation into a charge separation. The D1/D2 (PsbA/PsbD) reaction center heterodimer binds P680, the primary electron donor of PSII as well as several subsequent electron acceptors. This Prorocentrum micans (Red tide dinoflagellate) protein is Photosystem II protein D1.